A 107-amino-acid chain; its full sequence is Phosphoribosyl-ATP pyrophosphatase (107 aa).

This sequence belongs to the PRA-PH family.

It localises to the cytoplasm. The enzyme catalyses 1-(5-phospho-beta-D-ribosyl)-ATP + H2O = 1-(5-phospho-beta-D-ribosyl)-5'-AMP + diphosphate + H(+). It participates in amino-acid biosynthesis; L-histidine biosynthesis; L-histidine from 5-phospho-alpha-D-ribose 1-diphosphate: step 2/9. The polypeptide is Phosphoribosyl-ATP pyrophosphatase (Sinorhizobium medicae (strain WSM419) (Ensifer medicae)).